The primary structure comprises 616 residues: Chaperone protein HscA homolog (616 aa).

It belongs to the heat shock protein 70 family.

Its function is as follows. Chaperone involved in the maturation of iron-sulfur cluster-containing proteins. Has a low intrinsic ATPase activity which is markedly stimulated by HscB. This is Chaperone protein HscA homolog from Histophilus somni (strain 2336) (Haemophilus somnus).